A 625-amino-acid chain; its full sequence is Probable receptor-like protein kinase At1g11050 (625 aa).

Residues 1–20 (MPNSILFLLLSFLYLTNCVA) form the signal peptide. Residues 21–227 (QSPSQTCPLD…PLNSKKKRHT (207 aa)) lie on the Extracellular side of the membrane. N-linked (GlcNAc...) asparagine glycans are attached at residues Asn40, Asn106, Asn121, and Asn177. The helical transmembrane segment at 228 to 248 (VALALGITGAIFGALVIAGLI) threads the bilayer. Residues 249-625 (CLYFRFGKAV…LQIHSGDMLR (377 aa)) lie on the Cytoplasmic side of the membrane. A Protein kinase domain is found at 295-555 (FSQKNFIGRG…NPKGIMERFL (261 aa)). Residues 301-309 (IGRGGFGFV) and Lys323 contribute to the ATP site. Residue Asp426 is the Proton acceptor of the active site.

It belongs to the protein kinase superfamily. Ser/Thr protein kinase family.

The protein localises to the membrane. The enzyme catalyses L-seryl-[protein] + ATP = O-phospho-L-seryl-[protein] + ADP + H(+). The catalysed reaction is L-threonyl-[protein] + ATP = O-phospho-L-threonyl-[protein] + ADP + H(+). The polypeptide is Probable receptor-like protein kinase At1g11050 (Arabidopsis thaliana (Mouse-ear cress)).